The sequence spans 329 residues: Helicase VP6-A (329 aa).

2 disordered regions span residues 27 to 130 (INLV…TNGG) and 189 to 232 (DLRR…SEEP). 3 stretches are compositionally biased toward basic and acidic residues: residues 36-58 (EGGKEDKTEPKEESKAEGSKDGE), 65-83 (GQKEEGGKETKDADVDRRI), and 96-109 (SGERANENANRGDG). An ATP-binding site is contributed by lysine 110. Positions 110 to 129 (KVGGGGGDADAGVGATGTNG) are enriched in gly residues. 2 stretches are compositionally biased toward basic and acidic residues: residues 189–207 (DLRRKEKNGTHAKAVERGG) and 215–232 (HGDAQREGVEEEKTSEEP).

This sequence belongs to the reoviruses VP6 family. In terms of assembly, homohexamer.

The protein resides in the virion. The catalysed reaction is ATP + H2O = ADP + phosphate + H(+). ATP dependent RNA helicase essential for RNA packaging and viral transcription. Possesses ss- and dsRNA-binding capacity. This is Helicase VP6-A (Segment-9) from Antilocapra americana (Pronghorn).